Here is a 310-residue protein sequence, read N- to C-terminus: MDVDVFNGWGRPRFEDESLMPPGFRFHPTDEELITYYLLKKVLDSNFSCAAISQVDLNKSEPWELPEKAKMGEKEWYFFTLRDRKYPTGLRTNRATEAGYWKATGKDREIKSSKTKSLLGMKKTLVFYKGRAPKGEKSCWVMHEYRLDGKFSYHYISSSAKDEWVLCKVCLKSGVVSRETNLISSSSSSAVTGEFSSAGSAIAPIINTFATEHVSCFSNNSAAHTDASFHTFLPAPPPSLPPRQPRHVGDGVAFGQFLDLGSSGQIDFDAAAAAFFPNLPSLPPTVLPPPPSFAMYGGGSPAVSVWPFTL.

An NAC domain is found at 20–172 (MPPGFRFHPT…EWVLCKVCLK (153 aa)). Residues 119–178 (LGMKKTLVFYKGRAPKGEKSCWVMHEYRLDGKFSYHYISSSAKDEWVLCKVCLKSGVVSR) mediate DNA binding. Involved in transactivation activity stretches follow at residues 179 to 210 (ETNLISSSSSSAVTGEFSSAGSAIAPIINTFA) and 306 to 310 (WPFTL).

Expressed in inflorescence stems, rosette leaves, aerial parts of seedlings, flowers, floral buds and roots.

It is found in the nucleus. In terms of biological role, transcription activator of STM and KNAT6. Involved in molecular mechanisms regulating shoot apical meristem (SAM) formation during embryogenesis and organ separation. Required for the fusion of septa of gynoecia along the length of the ovaries. Activates the shoot formation in callus in a STM-dependent manner. Seems to act as an inhibitor of cell division. This Arabidopsis thaliana (Mouse-ear cress) protein is Protein CUP-SHAPED COTYLEDON 1 (NAC054).